We begin with the raw amino-acid sequence, 142 residues long: Putative pre-16S rRNA nuclease (142 aa).

It belongs to the YqgF nuclease family.

The protein resides in the cytoplasm. In terms of biological role, could be a nuclease involved in processing of the 5'-end of pre-16S rRNA. This is Putative pre-16S rRNA nuclease from Lactobacillus delbrueckii subsp. bulgaricus (strain ATCC BAA-365 / Lb-18).